A 135-amino-acid polypeptide reads, in one-letter code: Membrane-anchored ubiquitin-fold protein 4 (135 aa).

The interval 1-20 is disordered; the sequence is MAEKEEGKVAAEGGAEAEAD. The Ubiquitin-like domain occupies 23 to 92; that stretch reads VEVKFRLFDG…NDKNIAQCRA (70 aa). Cys132 is subject to Cysteine methyl ester. Cys132 carries the S-geranylgeranyl cysteine lipid modification. A propeptide spans 133–135 (removed in mature form); the sequence is TIL.

Its subcellular location is the cell membrane. May serve as docking site to facilitate the association of other proteins to the plasma membrane. The chain is Membrane-anchored ubiquitin-fold protein 4 (MUB4) from Oryza sativa subsp. japonica (Rice).